A 443-amino-acid chain; its full sequence is Phosphoglucosamine mutase (443 aa).

S101 serves as the catalytic Phosphoserine intermediate. Positions 101, 239, 241, and 243 each coordinate Mg(2+). S101 bears the Phosphoserine mark.

The protein belongs to the phosphohexose mutase family. Mg(2+) serves as cofactor. In terms of processing, activated by phosphorylation.

It carries out the reaction alpha-D-glucosamine 1-phosphate = D-glucosamine 6-phosphate. Catalyzes the conversion of glucosamine-6-phosphate to glucosamine-1-phosphate. This chain is Phosphoglucosamine mutase, found in Francisella tularensis subsp. tularensis (strain FSC 198).